Consider the following 341-residue polypeptide: N-acetyl-gamma-glutamyl-phosphate reductase (341 aa).

C147 is a catalytic residue.

This sequence belongs to the NAGSA dehydrogenase family. Type 1 subfamily.

It is found in the cytoplasm. It carries out the reaction N-acetyl-L-glutamate 5-semialdehyde + phosphate + NADP(+) = N-acetyl-L-glutamyl 5-phosphate + NADPH + H(+). Its pathway is amino-acid biosynthesis; L-arginine biosynthesis; N(2)-acetyl-L-ornithine from L-glutamate: step 3/4. Catalyzes the NADPH-dependent reduction of N-acetyl-5-glutamyl phosphate to yield N-acetyl-L-glutamate 5-semialdehyde. The protein is N-acetyl-gamma-glutamyl-phosphate reductase of Dehalococcoides mccartyi (strain ATCC BAA-2100 / JCM 16839 / KCTC 5957 / BAV1).